A 244-amino-acid chain; its full sequence is UL16-binding protein 1 (244 aa).

An N-terminal signal peptide occupies residues 1–25 (MAAAASPAFLLCLPLLHLLSGWSRA). Positions 26 to 117 (GWVDTHCLCY…IQVENLIPIE (92 aa)) are MHC class I alpha-1 like. Cys50 and Cys66 are oxidised to a cystine. Asn82 carries N-linked (GlcNAc...) asparagine glycosylation. Residues 118–208 (PLTLQARMSC…MYWEQMLDPT (91 aa)) are MHC class I alpha-2 like. Cys127 and Cys190 are joined by a disulfide. Residue Gly216 is the site of GPI-anchor amidated glycine attachment. The propeptide at 217–244 (TTQPKAMATTLSPWSLLIIFLCFILAGR) is removed in mature form.

The protein belongs to the MHC class I family. Interacts with KLRK1/NKG2D. Does not bind to beta2-microglobulin. As to quaternary structure, (Microbial infection) In CMV-infected cells, interacts with the viral glycoprotein UL16; this interaction causes ULBP1 retention in the endoplasmic reticulum and cis-Golgi and prevents binding to and activation of KLRK1/NKG2D, providing CMV with an immune evasion mechanism. As to expression, expressed in T-cells, B-cells, erythroleukemia cell lines and in a wide range of tissues including heart, brain, lung, liver, testis, lymph node, thymus, tonsil and bone marrow. Also found in fetal heart, brain, lung and liver.

It is found in the cell membrane. It localises to the endoplasmic reticulum. In terms of biological role, binds and activates the KLRK1/NKG2D receptor, mediating natural killer cell cytotoxicity. This chain is UL16-binding protein 1 (ULBP1), found in Homo sapiens (Human).